Consider the following 454-residue polypeptide: Adenylosuccinate synthetase isozyme 1 B (454 aa).

Residues 1 to 24 (MSGTRASNDRSSHPGAGGHKRPRY) are disordered. GTP contacts are provided by residues 39–45 (GDEGKGK) and 67–69 (GHT). Aspartate 40 serves as the catalytic Proton acceptor. Positions 40 and 67 each coordinate Mg(2+). A substrate-binding site is contributed by aspartate 40. IMP-binding positions include 40–43 (DEGK), 65–68 (NAGH), threonine 160, arginine 174, asparagine 253, threonine 268, and arginine 332. The active-site Proton donor is histidine 68. 328–334 (VTTGRKR) is a binding site for substrate. GTP is bound by residues arginine 334, 360 to 362 (KLD), and 442 to 445 (GVGK).

Belongs to the adenylosuccinate synthetase family. As to quaternary structure, homodimer. Mg(2+) is required as a cofactor.

The protein resides in the cytoplasm. It catalyses the reaction IMP + L-aspartate + GTP = N(6)-(1,2-dicarboxyethyl)-AMP + GDP + phosphate + 2 H(+). It functions in the pathway purine metabolism; AMP biosynthesis via de novo pathway; AMP from IMP: step 1/2. In terms of biological role, component of the purine nucleotide cycle (PNC), which interconverts IMP and AMP to regulate the nucleotide levels in various tissues, and which contributes to glycolysis and ammoniagenesis. Catalyzes the first committed step in the biosynthesis of AMP from IMP. This chain is Adenylosuccinate synthetase isozyme 1 B (adss1-b), found in Xenopus laevis (African clawed frog).